Consider the following 389-residue polypeptide: Tubulin-like protein CetZ3 (389 aa).

GTP contacts are provided by residues 10 to 14 (QAGGK), 110 to 112 (GTG), glutamate 142, asparagine 169, and asparagine 187.

Belongs to the CetZ family.

Its subcellular location is the cytoplasm. Its function is as follows. Involved in cell shape control. The chain is Tubulin-like protein CetZ3 from Haloferax volcanii (strain ATCC 29605 / DSM 3757 / JCM 8879 / NBRC 14742 / NCIMB 2012 / VKM B-1768 / DS2) (Halobacterium volcanii).